Consider the following 302-residue polypeptide: Large ribosomal subunit protein bL28m (302 aa).

This sequence belongs to the bacterial ribosomal protein bL28 family. Component of the mitochondrial ribosome large subunit (39S) which comprises a 16S rRNA and about 50 distinct proteins.

Its subcellular location is the mitochondrion. The chain is Large ribosomal subunit protein bL28m (mRpL28) from Drosophila melanogaster (Fruit fly).